The primary structure comprises 216 residues: Protein fmp32, mitochondrial (216 aa).

Residues 111–133 (RQEMVALHSQVEQLFSDVERLKT) are a coiled coil. Residues 193 to 215 (TLQWVFGIVTGSGALLLAYVRLI) traverse the membrane as a helical segment.

The protein belongs to the CCDC90 family.

It localises to the mitochondrion. The protein localises to the membrane. This chain is Protein fmp32, mitochondrial (fmp32), found in Schizosaccharomyces pombe (strain 972 / ATCC 24843) (Fission yeast).